Here is a 904-residue protein sequence, read N- to C-terminus: Protein translocase subunit SecA (904 aa).

Residues Q89, 107-111 (GEGKT), and D496 each bind ATP. The disordered stretch occupies residues 870–904 (GGFQELSSGTPSPTVTVTTSSGGGTERKTSRRRKR). Over residues 876–889 (SSGTPSPTVTVTTS) the composition is skewed to low complexity.

Belongs to the SecA family. Monomer and homodimer. Part of the essential Sec protein translocation apparatus which comprises SecA, SecYEG and auxiliary proteins SecDF. Other proteins may also be involved.

It is found in the cell inner membrane. The protein localises to the cytoplasm. The enzyme catalyses ATP + H2O + cellular proteinSide 1 = ADP + phosphate + cellular proteinSide 2.. Its function is as follows. Part of the Sec protein translocase complex. Interacts with the SecYEG preprotein conducting channel. Has a central role in coupling the hydrolysis of ATP to the transfer of proteins into and across the cell membrane, serving as an ATP-driven molecular motor driving the stepwise translocation of polypeptide chains across the membrane. This chain is Protein translocase subunit SecA, found in Leptospira borgpetersenii serovar Hardjo-bovis (strain L550).